We begin with the raw amino-acid sequence, 567 residues long: UPF0313 protein CTN_0332 (567 aa).

The Radical SAM core domain occupies 288-560 (KAIETVKFSI…NKMKENVLFK (273 aa)). Residues Cys303, Cys307, and Cys310 each contribute to the [4Fe-4S] cluster site.

The protein belongs to the UPF0313 family. It depends on [4Fe-4S] cluster as a cofactor.

This chain is UPF0313 protein CTN_0332, found in Thermotoga neapolitana (strain ATCC 49049 / DSM 4359 / NBRC 107923 / NS-E).